A 232-amino-acid chain; its full sequence is tRNA (guanine-N(1)-)-methyltransferase (232 aa).

Residues glycine 112 and 132–137 contribute to the S-adenosyl-L-methionine site; that span reads IGDYIL.

It belongs to the RNA methyltransferase TrmD family. Homodimer.

The protein resides in the cytoplasm. The catalysed reaction is guanosine(37) in tRNA + S-adenosyl-L-methionine = N(1)-methylguanosine(37) in tRNA + S-adenosyl-L-homocysteine + H(+). Its function is as follows. Specifically methylates guanosine-37 in various tRNAs. The chain is tRNA (guanine-N(1)-)-methyltransferase from Methylacidiphilum infernorum (isolate V4) (Methylokorus infernorum (strain V4)).